The chain runs to 327 residues: Serpentine receptor class alpha-33 (327 aa).

6 helical membrane-spanning segments follow: residues 20–40 (FSVY…VLAI), 56–76 (LLIT…FLQN), 133–153 (FSHA…STVF), 186–206 (IIPY…LIIY), 227–247 (AVVS…LFCF), and 270–290 (IIGW…AVFL).

Belongs to the nematode receptor-like protein sra family.

Its subcellular location is the membrane. This is Serpentine receptor class alpha-33 (sra-33) from Caenorhabditis elegans.